Here is a 351-residue protein sequence, read N- to C-terminus: MTPSAISPVAAGWIRRWLILMALMVYAIILVGGATRLTDSGLSITEWRPVSGALPPMSEAAWLVEFEKYRATTQYQLTNAGMALSEFQFIYWWEWGHRQIGRLIGLVAVAGFAFFAWRRWLGQGLGWKLVGLIALGGLQGAIGWWMVSSGIGETERVSVAPYRLMTHFTLALLILAVIAWLWLDLGRQQRAGAPRAAQRAAMALMGLIFVQMAAGALVAGLDAGRTYTDWPLMAGEVFPAHYIHAELGVRSFFEGREATQFNHRLLAYGLWAGSLAAAWAFRKTDVHREFAFLAVLVSAQAVWGILTLVNAAPMGLALVHQGLGVVTTLWAVYTVWRAGGPKTVAEINPPA.

The next 8 helical transmembrane spans lie at 17–37 (WLIL…ATRL), 103–123 (LIGL…WLGQ), 129–149 (LVGL…MVSS), 164–184 (LMTH…LWLD), 201–221 (AMAL…VAGL), 261–281 (FNHR…AWAF), 289–309 (EFAF…LTLV), and 316–336 (LALV…YTVW). A heme-binding site is contributed by H263. H320 contacts heme.

It belongs to the COX15/CtaA family. Type 2 subfamily. Interacts with CtaB. The cofactor is heme b.

The protein localises to the cell membrane. It catalyses the reaction Fe(II)-heme o + 2 A + H2O = Fe(II)-heme a + 2 AH2. The protein operates within porphyrin-containing compound metabolism; heme A biosynthesis; heme A from heme O: step 1/1. Functionally, catalyzes the conversion of heme O to heme A by two successive hydroxylations of the methyl group at C8. The first hydroxylation forms heme I, the second hydroxylation results in an unstable dihydroxymethyl group, which spontaneously dehydrates, resulting in the formyl group of heme A. The chain is Heme A synthase from Hyphomonas neptunium (strain ATCC 15444).